The sequence spans 530 residues: TNF receptor-associated factor family protein DDB_G0272829 (530 aa).

The segment at 35 to 81 (CQICEGLLISSLIPNRMKALQCINGHCFCLTCWESILEIKSECPTCR) adopts an RING-type; degenerate zinc-finger fold. 2 consecutive TRAF-type zinc fingers follow at residues 134-188 (RHES…KQMQ) and 189-246 (GHIL…NDND). 3 disordered regions span residues 242 to 267 (NNDN…LSSS), 391 to 432 (TTTT…DNQG), and 483 to 530 (FNQL…GTSL). 3 stretches are compositionally biased toward low complexity: residues 253 to 267 (NNSN…LSSS), 391 to 415 (TTTT…NNNN), and 485 to 502 (QLSQ…SQSL). Residues 361–422 (ILEHQQQQNQ…NNNNEDEEDD (62 aa)) are a coiled coil. Over residues 509-530 (ITINQNQNTPSNPFSIFSGTSL) the composition is skewed to polar residues.

The protein belongs to the TNF receptor-associated factor family.

It is found in the cytoplasm. Its function is as follows. Probable adapter protein and signal transducer that links members of the tumor necrosis factor receptor family to different signaling pathways by association with the receptor cytoplasmic domain and kinases. This Dictyostelium discoideum (Social amoeba) protein is TNF receptor-associated factor family protein DDB_G0272829.